The following is a 329-amino-acid chain: 3-dehydroquinate synthase (329 aa).

Belongs to the archaeal-type DHQ synthase family.

It carries out the reaction 2-amino-2,3,7-trideoxy-D-lyxo-hept-6-ulosonate + NAD(+) + H2O = 3-dehydroquinate + NH4(+) + NADH + H(+). Catalyzes the oxidative deamination and cyclization of 2-amino-3,7-dideoxy-D-threo-hept-6-ulosonic acid (ADH) to yield 3-dehydroquinate (DHQ), which is fed into the canonical shikimic pathway of aromatic amino acid biosynthesis. The polypeptide is 3-dehydroquinate synthase (Methanoregula boonei (strain DSM 21154 / JCM 14090 / 6A8)).